Here is a 961-residue protein sequence, read N- to C-terminus: DNA repair endonuclease XPF (961 aa).

Disordered stretches follow at residues 1–27 (MADSCAENAAKGTENERPKEVEASADT), 451–485 (NYAKESQTRSAPPKNVSSNKELRREEVSGSQPPLA), and 674–693 (PTDENAKSRQAGGQAPQATK). Residues 13-22 (TENERPKEVE) are compositionally biased toward basic and acidic residues. The span at 458–469 (TRSAPPKNVSSN) shows a compositional bias: polar residues. The 81-residue stretch at 697 to 777 (KVIVDMREFR…KPILLIEFDQ (81 aa)) folds into the ERCC4 domain.

This sequence belongs to the XPF family. As to quaternary structure, heterodimer. Interacts with hdm.

It is found in the nucleus. Functionally, implicated in recombination events during meiosis, mostly in meiotic exchange. May directly resolve Holliday junctions within recombination intermediates leading to DNA exchange. Also required for the repair of mismatches within meiotic heteroduplex DNA and for nucleotide excision repair. The sequence is that of DNA repair endonuclease XPF (mei-9) from Drosophila melanogaster (Fruit fly).